A 403-amino-acid polypeptide reads, in one-letter code: Tryptophan synthase beta chain (403 aa).

At Lys87 the chain carries N6-(pyridoxal phosphate)lysine.

It belongs to the TrpB family. In terms of assembly, tetramer of two alpha and two beta chains. It depends on pyridoxal 5'-phosphate as a cofactor.

The enzyme catalyses (1S,2R)-1-C-(indol-3-yl)glycerol 3-phosphate + L-serine = D-glyceraldehyde 3-phosphate + L-tryptophan + H2O. It participates in amino-acid biosynthesis; L-tryptophan biosynthesis; L-tryptophan from chorismate: step 5/5. The beta subunit is responsible for the synthesis of L-tryptophan from indole and L-serine. The chain is Tryptophan synthase beta chain from Shewanella loihica (strain ATCC BAA-1088 / PV-4).